The primary structure comprises 1176 residues: DNA-directed RNA polymerase subunit beta (1176 aa).

Positions 13 to 30 (TDASLHQGRPQSSSNSSV) are enriched in polar residues. Residues 13 to 35 (TDASLHQGRPQSSSNSSVPGAPN) are disordered.

The protein belongs to the RNA polymerase beta chain family. The RNAP catalytic core consists of 2 alpha, 1 beta, 1 beta' and 1 omega subunit. When a sigma factor is associated with the core the holoenzyme is formed, which can initiate transcription.

The enzyme catalyses RNA(n) + a ribonucleoside 5'-triphosphate = RNA(n+1) + diphosphate. Functionally, DNA-dependent RNA polymerase catalyzes the transcription of DNA into RNA using the four ribonucleoside triphosphates as substrates. In Mycobacterium ulcerans (strain Agy99), this protein is DNA-directed RNA polymerase subunit beta.